Reading from the N-terminus, the 120-residue chain is MSSDKSSDSKNGLKNCDPRCEQKCETKCQPSCLNKLLQRCSEKCSLDKCPPSPNCPPCPPCPPCPLVCQSQCSTPTSPLCPPLCSPRCSGTLACCPPSCPQKGCVKPCPPKCPSPCLPRK.

It belongs to the cornifin (SPRR) family.

The protein is Late cornified envelope-like proline-rich protein 1 (Lelp1) of Mus musculus (Mouse).